We begin with the raw amino-acid sequence, 223 residues long: uncharacterized protein (223 aa).

The segment at 33 to 67 adopts a C4-type zinc-finger fold; it reads CPICGGKGTLKAIQFIHRIPYFGEVMESTVVCERC.

The protein belongs to the ZPR1 family.

This is an uncharacterized protein from Pyrococcus horikoshii (strain ATCC 700860 / DSM 12428 / JCM 9974 / NBRC 100139 / OT-3).